The following is a 417-amino-acid chain: Tyrosine--tRNA ligase (417 aa).

L-tyrosine is bound at residue tyrosine 39. Residues 44-53 (PTAPSLHAGG) carry the 'HIGH' region motif. Tyrosine 176 and glutamine 180 together coordinate L-tyrosine. A 'KMSKS' region motif is present at residues 236 to 240 (KMGKS). Lysine 239 lines the ATP pocket. Residues 350–417 (IGVLALMVLA…KKRHVLIRPA (68 aa)) form the S4 RNA-binding domain.

It belongs to the class-I aminoacyl-tRNA synthetase family. TyrS type 1 subfamily. In terms of assembly, homodimer.

The protein resides in the cytoplasm. It catalyses the reaction tRNA(Tyr) + L-tyrosine + ATP = L-tyrosyl-tRNA(Tyr) + AMP + diphosphate + H(+). Functionally, catalyzes the attachment of tyrosine to tRNA(Tyr) in a two-step reaction: tyrosine is first activated by ATP to form Tyr-AMP and then transferred to the acceptor end of tRNA(Tyr). This chain is Tyrosine--tRNA ligase, found in Brucella suis biovar 1 (strain 1330).